We begin with the raw amino-acid sequence, 149 residues long: Probable flagellum biosynthesis repressor protein FlbT (149 aa).

It belongs to the FlbT family.

Functionally, has a post-transcriptional repressor function in flagellum biogenesis. Associates with the 5'-UTR of fljK mRNA and promotes its degradation. This Agrobacterium fabrum (strain C58 / ATCC 33970) (Agrobacterium tumefaciens (strain C58)) protein is Probable flagellum biosynthesis repressor protein FlbT.